The primary structure comprises 75 residues: Pi-hexatoxin-Hi1a (75 aa).

6 cysteine pairs are disulfide-bonded: Cys3/Cys18, Cys10/Cys23, Cys17/Cys33, Cys40/Cys55, Cys47/Cys60, and Cys54/Cys71. 2 Domain repeats span residues 3–33 and 40–71; these read CIRK…FEVC and CLVK…SSVC. The 2 X approximate repeats with cysteine pattern C-C-CC-C-C stretch occupies residues 3–71; the sequence is CIRKWLSCVD…KRSGNKSSVC (69 aa).

It belongs to the psalmotoxin-1 family. Double-knot toxin subfamily. In terms of tissue distribution, expressed by the venom gland.

The protein resides in the secreted. This toxin potently and selectively inhibits ASIC1a (IC(50)=0.4 nM on rASIC1a and IC(50)=0.52 nM on hASIC1a), an isoform of the gene ASIC1. It incompletely inhibits ASIC1a activation in a pH-independent and slowly reversible manner (Tau(off)=14.2 minutes for rASIC1a and 31.8 minutes for hASIC1a). This toxin acts by binding to and stabilizing the closed state of the channel, thereby impeding the transition into a conducting state. This toxin may bind to the acidic pocket of ASIC1a, since mutation of a key residue of this pocket (Arg-350) abolishes the ability of the toxin to inhibit ASIC1a. In addition, it shows antiparasitic activities, since it moderately inhibits the larval development of the major pathogenic nematode of ruminants (H.contortus, IC(50)=22.9 uM). In vivo, this toxin protects the brain from neuronal injury when administered up to 8 hours after stroke onset. The polypeptide is Pi-hexatoxin-Hi1a (Hadronyche infensa (Fraser island funnel-web spider)).